We begin with the raw amino-acid sequence, 195 residues long: Pyruvoyl-dependent arginine decarboxylase AaxB (195 aa).

Serine 53 is subject to Pyruvic acid (Ser).

It belongs to the pyruvoyl-dependent arginine decarboxylase family. As to quaternary structure, trimer of an alpha-beta dimer. Pyruvate serves as cofactor.

It is found in the cytoplasm. It carries out the reaction L-arginine + H(+) = agmatine + CO2. Its function is as follows. Part of the AaxABC system, catalyzes the decarboxylation of L-arginine. The arginine uptake by the bacterium in the macrophage may be a virulence factor against the host innate immune response. This is Pyruvoyl-dependent arginine decarboxylase AaxB (aaxB) from Chlamydia caviae (strain ATCC VR-813 / DSM 19441 / 03DC25 / GPIC) (Chlamydophila caviae).